A 255-amino-acid polypeptide reads, in one-letter code: tRNA pseudouridine synthase A (255 aa).

The Nucleophile role is filled by aspartate 43. Tyrosine 94 serves as a coordination point for substrate.

Belongs to the tRNA pseudouridine synthase TruA family.

It carries out the reaction uridine(38/39/40) in tRNA = pseudouridine(38/39/40) in tRNA. Functionally, formation of pseudouridine at positions 38, 39 and 40 in the anticodon stem and loop of transfer RNAs. This Pyrobaculum neutrophilum (strain DSM 2338 / JCM 9278 / NBRC 100436 / V24Sta) (Thermoproteus neutrophilus) protein is tRNA pseudouridine synthase A.